A 101-amino-acid polypeptide reads, in one-letter code: Urease subunit beta (101 aa).

This sequence belongs to the urease beta subunit family. Heterotrimer of UreA (gamma), UreB (beta) and UreC (alpha) subunits. Three heterotrimers associate to form the active enzyme.

It localises to the cytoplasm. The enzyme catalyses urea + 2 H2O + H(+) = hydrogencarbonate + 2 NH4(+). It functions in the pathway nitrogen metabolism; urea degradation; CO(2) and NH(3) from urea (urease route): step 1/1. The chain is Urease subunit beta from Polaromonas naphthalenivorans (strain CJ2).